The chain runs to 279 residues: MTQVYDGFVHLGFSNRNGRTISHKKYQEGNSRVSADNSDANGVPYYFLINMGGGFVEGEQYQVTIDVNKDAHALVTTQTPTYVYKCEKGQLTQQNTSITLEENSYLEYMADEVIPYLKSRYFQTSRIDMDKSAHLIYSDGVTAGWSHEDLPFQYHYFRNLTQIYQDNELVYSDQTLLEPEKQDMFKLGYFEGWRNYNSLVMVSPNIDEAFVKALQKHLEGLNLESDFAISSLDISGLVLRILGKTAEDNRRIIYSCADYFRQEIHGLTPLNLRKNDMRR.

This sequence belongs to the UreD family. As to quaternary structure, ureD, UreF and UreG form a complex that acts as a GTP-hydrolysis-dependent molecular chaperone, activating the urease apoprotein by helping to assemble the nickel containing metallocenter of UreC. The UreE protein probably delivers the nickel.

The protein localises to the cytoplasm. Functionally, required for maturation of urease via the functional incorporation of the urease nickel metallocenter. This Streptococcus thermophilus (strain ATCC BAA-250 / LMG 18311) protein is Urease accessory protein UreD.